A 580-amino-acid polypeptide reads, in one-letter code: DBIRD complex subunit ZNF326 (580 aa).

The tract at residues 1–124 (MDFEDDYVHS…YRNSLDSFGG (124 aa)) is mediates transcriptional activation. Residues Ser-48, Ser-56, Ser-63, Ser-69, Ser-81, Ser-82, Ser-91, Ser-106, Ser-114, Ser-118, Ser-121, and Ser-137 each carry the phosphoserine modification. Lys-140 participates in a covalent cross-link: Glycyl lysine isopeptide (Lys-Gly) (interchain with G-Cter in SUMO2). The segment at 156-196 (SYSSFSSPHMKPAPVGSRGRGTPAYPESTFGSRSYDAFGGP) is disordered. Position 173 is an omega-N-methylarginine (Arg-173). Residue Ser-212 is modified to Phosphoserine. Arg-235 carries the post-translational modification Omega-N-methylarginine. Residues 238–260 (KRKMMQIFIKPGGAFIKKPKLAK) carry the Bipartite nuclear localization signal motif. Lys-240 is covalently cross-linked (Glycyl lysine isopeptide (Lys-Gly) (interchain with G-Cter in SUMO2)). Position 247 is an N6-acetyllysine; alternate (Lys-247). Lys-247 is covalently cross-linked (Glycyl lysine isopeptide (Lys-Gly) (interchain with G-Cter in SUMO2); alternate). Residues Lys-254 and Lys-264 each participate in a glycyl lysine isopeptide (Lys-Gly) (interchain with G-Cter in SUMO2) cross-link. The tract at residues 256 to 302 (PKLAKPMDKMNLSKSPTKTDPKNEEEEKRRIEARREKQRRRREKNSE) is disordered. Residue Ser-270 is modified to Phosphoserine. The span at 272-290 (TKTDPKNEEEEKRRIEARR) shows a compositional bias: basic and acidic residues. A C2H2 AKAP95-type 1 zinc finger spans residues 314 to 336 (CSFCKFRTFEEKDIELHLESSSH). Lys-401 is covalently cross-linked (Glycyl lysine isopeptide (Lys-Gly) (interchain with G-Cter in SUMO2)). The segment at 407–430 (CSACSVYIPALHSSVQLHLKSPDH) adopts a C2H2 AKAP95-type 2 zinc-finger fold. Residues Lys-459 and Lys-467 each participate in a glycyl lysine isopeptide (Lys-Gly) (interchain with G-Cter in SUMO2) cross-link. The disordered stretch occupies residues 470–580 (NPFEIQDHPQ…ATEQCEHRQM (111 aa)). Positions 483–529 (IEGDEEDEEKIDEPIEEEEEEEEEEEEEGEEAGSVEEEGDVEGEEGT) are enriched in acidic residues. The span at 530 to 539 (AEAAAAGEAD) shows a compositional bias: low complexity. Over residues 540–562 (AVGEAEGAGEAEEAEEEEEEEGT) the composition is skewed to acidic residues.

It belongs to the AKAP95 family. Component of the DBIRD complex. Interacts with CCAR2; the interaction is direct. Ubiquitously expressed in adult tissues. Highly expressed in neuronal tissues such as brain and neural tube.

It is found in the nucleus matrix. Core component of the DBIRD complex, a multiprotein complex that acts at the interface between core mRNP particles and RNA polymerase II (RNAPII) and integrates transcript elongation with the regulation of alternative splicing: the DBIRD complex affects local transcript elongation rates and alternative splicing of a large set of exons embedded in (A + T)-rich DNA regions. May also play a role in neuronal differentiation. Able to bind DNA and activate expression in vitro. This Mus musculus (Mouse) protein is DBIRD complex subunit ZNF326 (Znf326).